A 316-amino-acid polypeptide reads, in one-letter code: Remorin 4.1 (316 aa).

Disordered stretches follow at residues 1–108 (MLSE…PSEL), 125–202 (NANA…SVGQ), and 267–287 (AQNEVAKARRKAEEKRASAEA). Over residues 40–53 (EREEEVVVEEELEE) the composition is skewed to acidic residues. Over residues 92–104 (RHTSIRSVGSDTA) the composition is skewed to polar residues. A compositionally biased stretch (low complexity) spans 125 to 135 (NANAAAAAAAN). Composition is skewed to basic and acidic residues over residues 143 to 153 (GVDDALGRIGE) and 277 to 287 (KAEEKRASAEA). The stretch at 242-288 (VEKANAWLKKYERKLEEKRAKAMEKAQNEVAKARRKAEEKRASAEAK) forms a coiled coil.

Belongs to the remorin family. As to quaternary structure, interacts with BAK1. In terms of processing, phosphorylated by BRI1. Phosphorylation reduces the binding affinity to BAK1. As to expression, expressed in roots, leaf blades and leaf sheaths. Expressed at low levels in stems and spikelets.

Its subcellular location is the cell membrane. In terms of biological role, functions in abscisic acid (ABA) signaling downstream of BZIP23. Acts as antagonistic and negative regulator of brassinosteroid (BR) signaling. Binds to BAK1 and inhibits its interaction with the BR receptor BRI1. Inhibits the formation and subsequent activation of the BRI1-BAK1 receptor complex. This is Remorin 4.1 from Oryza sativa subsp. japonica (Rice).